Reading from the N-terminus, the 445-residue chain is UPF0210 protein SEQ_0468 (445 aa).

The protein belongs to the UPF0210 family. In terms of assembly, homodimer.

This chain is UPF0210 protein SEQ_0468, found in Streptococcus equi subsp. equi (strain 4047).